The chain runs to 128 residues: uncharacterized protein (128 aa).

This is an uncharacterized protein from Mycobacterium bovis (strain ATCC BAA-935 / AF2122/97).